We begin with the raw amino-acid sequence, 714 residues long: DNA gyrase subunit B (714 aa).

The region spanning 492 to 606 is the Toprim domain; sequence SELYVVEGDS…NGHVFLAQPP (115 aa). 3 residues coordinate Mg(2+): Glu498, Asp571, and Asp573.

It belongs to the type II topoisomerase GyrB family. In terms of assembly, heterotetramer, composed of two GyrA and two GyrB chains. In the heterotetramer, GyrA contains the active site tyrosine that forms a transient covalent intermediate with DNA, while GyrB binds cofactors and catalyzes ATP hydrolysis. The cofactor is Mg(2+). It depends on Mn(2+) as a cofactor. Ca(2+) serves as cofactor.

The protein resides in the cytoplasm. The enzyme catalyses ATP-dependent breakage, passage and rejoining of double-stranded DNA.. Its activity is regulated as follows. DNA supercoiling is inhibited by EDTA, novobiocin, coumermycin and ciprofloxacin. A type II topoisomerase that negatively supercoils closed circular double-stranded DNA in an ATP-dependent manner and also catalyzes the interconversion of other topological isomers of double-stranded DNA rings, including catenanes and knotted rings. Relaxes negatively supercoiled DNA in an ATP-independent manner. A linear reaction intermediate can be trapped in the presence of the antibiotic ciprofloxacin. Negative supercoiling favors strand separation, and DNA replication, transcription, recombination and repair, all of which involve strand separation. Type II topoisomerases break and join 2 DNA strands simultaneously in an ATP-dependent manner. This is DNA gyrase subunit B from Mycobacterium bovis (strain BCG / Pasteur 1173P2).